A 235-amino-acid chain; its full sequence is Purine nucleoside phosphorylase DeoD-type (235 aa).

H4 contacts a purine D-ribonucleoside. Phosphate-binding positions include G20, R24, R43, and 87 to 90; that span reads RVGT. A purine D-ribonucleoside is bound by residues 179 to 181 and 203 to 204; these read EME and SN.

It belongs to the PNP/UDP phosphorylase family. In terms of assembly, homohexamer; trimer of homodimers.

The enzyme catalyses a purine D-ribonucleoside + phosphate = a purine nucleobase + alpha-D-ribose 1-phosphate. It catalyses the reaction a purine 2'-deoxy-D-ribonucleoside + phosphate = a purine nucleobase + 2-deoxy-alpha-D-ribose 1-phosphate. Catalyzes the reversible phosphorolytic breakdown of the N-glycosidic bond in the beta-(deoxy)ribonucleoside molecules, with the formation of the corresponding free purine bases and pentose-1-phosphate. This is Purine nucleoside phosphorylase DeoD-type from Levilactobacillus brevis (strain ATCC 367 / BCRC 12310 / CIP 105137 / JCM 1170 / LMG 11437 / NCIMB 947 / NCTC 947) (Lactobacillus brevis).